The chain runs to 290 residues: Alpha-1,2-colitosyltransferase (290 aa).

It belongs to the glycosyltransferase 11 family. The cofactor is Does not require a metal cofactor..

It carries out the reaction GDP-beta-L-colitose + beta-D-galactosyl-(1-&gt;3)-N-acetyl-D-glucosamine = alpha-L-colitosyl-(1-&gt;2)-beta-D-galactosyl-(1-&gt;3)-N-acetyl-D-glucosamine + GDP + H(+). It functions in the pathway bacterial outer membrane biogenesis; LPS O-antigen biosynthesis. Addition of metal ions dramatically decreases the activity to 0-40%. In terms of biological role, involved in the biosynthesis of the lipopolysaccharide (LPS) O-antigen region. Catalyzes the transfer of colitose from GDP-colitose to the galactose residue of beta-Gal-(1-&gt;3)-GlcNAc (lacto-N-biose) via an alpha1,2-linkage. Is specific for beta-Gal-(1-&gt;3)-GlcNAc, but can use GDP-L-fucose as the sugar donor with almost the same efficiency as GDP-L-colitose. The protein is Alpha-1,2-colitosyltransferase of Escherichia coli.